The sequence spans 194 residues: MEVILLERVAKLGQMGELVRVKDGFARNFLLPRGKALRATAANRDKYEHMKADLEARNIEAKAEAAKVAEKIDGKNVIVIRQASETGQLFGSVSVRDIVTSFEADGVKITRSQILLDAPIKTIGRHTIEVAVHPEVEVGVSVTVARSVEEAERINRGEDISSRREDQDAAAEAIAAAGEFFDPDAQQDEEPEQQ.

The span at 156–167 (RGEDISSRREDQ) shows a compositional bias: basic and acidic residues. Residues 156-194 (RGEDISSRREDQDAAAEAIAAAGEFFDPDAQQDEEPEQQ) are disordered. Acidic residues predominate over residues 181 to 194 (FDPDAQQDEEPEQQ).

It belongs to the bacterial ribosomal protein bL9 family.

Its function is as follows. Binds to the 23S rRNA. This chain is Large ribosomal subunit protein bL9, found in Rhodopseudomonas palustris (strain BisB5).